The sequence spans 165 residues: Large ribosomal subunit protein uL22c (165 aa).

It belongs to the universal ribosomal protein uL22 family. As to quaternary structure, part of the 50S ribosomal subunit.

The protein resides in the plastid. It localises to the chloroplast. Its function is as follows. This protein binds specifically to 23S rRNA. Functionally, the globular domain of the protein is located near the polypeptide exit tunnel on the outside of the subunit, while an extended beta-hairpin is found that lines the wall of the exit tunnel in the center of the 70S ribosome. This is Large ribosomal subunit protein uL22c (rpl22) from Daucus carota (Wild carrot).